Consider the following 332-residue polypeptide: L-lactate dehydrogenase A chain (332 aa).

N-acetylalanine is present on Ala-2. Position 5 is an N6-acetyllysine; alternate (Lys-5). Lys-5 is subject to N6-succinyllysine; alternate. Position 14 is an N6-acetyllysine (Lys-14). Thr-18 is modified (phosphothreonine). Position 29-57 (29-57) interacts with NAD(+); that stretch reads GAVGMACAISILMKDLADELALVDVIEDK. Residue Lys-57 is modified to N6-acetyllysine; alternate. A Glycyl lysine isopeptide (Lys-Gly) (interchain with G-Cter in SUMO2); alternate cross-link involves residue Lys-57. An N6-acetyllysine modification is found at Lys-81. Residue Arg-99 participates in NAD(+) binding. Residue Arg-106 participates in substrate binding. An N6-acetyllysine; alternate modification is found at Lys-118. Lys-118 bears the N6-succinyllysine; alternate mark. Lys-126 carries the post-translational modification N6-acetyllysine. Position 138 (Asn-138) interacts with NAD(+). The substrate site is built by Asn-138 and Arg-169. Catalysis depends on His-193, which acts as the Proton acceptor. Residues Lys-224 and Lys-232 each carry the N6-acetyllysine modification. Tyr-239 is subject to Phosphotyrosine. Lys-243 is subject to N6-acetyllysine. A substrate-binding site is contributed by Thr-248. Thr-309 is subject to Phosphothreonine. At Lys-318 the chain carries N6-acetyllysine; alternate. Lys-318 is modified (N6-succinyllysine; alternate). Thr-322 is subject to Phosphothreonine.

It belongs to the LDH/MDH superfamily. LDH family. Homotetramer. Interacts with PTEN upstream reading frame protein MP31. Post-translationally, ISGylated.

The protein localises to the cytoplasm. The enzyme catalyses (S)-lactate + NAD(+) = pyruvate + NADH + H(+). Its pathway is fermentation; pyruvate fermentation to lactate; (S)-lactate from pyruvate: step 1/1. Functionally, interconverts simultaneously and stereospecifically pyruvate and lactate with concomitant interconversion of NADH and NAD(+). The sequence is that of L-lactate dehydrogenase A chain (LDHA) from Macaca fascicularis (Crab-eating macaque).